We begin with the raw amino-acid sequence, 107 residues long: Nucleoid-associated protein Oant_0022 (107 aa).

This sequence belongs to the YbaB/EbfC family. In terms of assembly, homodimer.

It is found in the cytoplasm. The protein localises to the nucleoid. In terms of biological role, binds to DNA and alters its conformation. May be involved in regulation of gene expression, nucleoid organization and DNA protection. The sequence is that of Nucleoid-associated protein Oant_0022 from Brucella anthropi (strain ATCC 49188 / DSM 6882 / CCUG 24695 / JCM 21032 / LMG 3331 / NBRC 15819 / NCTC 12168 / Alc 37) (Ochrobactrum anthropi).